A 151-amino-acid polypeptide reads, in one-letter code: Large ribosomal subunit protein uL13 (151 aa).

This sequence belongs to the universal ribosomal protein uL13 family. In terms of assembly, part of the 50S ribosomal subunit.

Functionally, this protein is one of the early assembly proteins of the 50S ribosomal subunit, although it is not seen to bind rRNA by itself. It is important during the early stages of 50S assembly. This chain is Large ribosomal subunit protein uL13, found in Petrotoga mobilis (strain DSM 10674 / SJ95).